Consider the following 149-residue polypeptide: Large ribosomal subunit protein uL15 (149 aa).

Residues 1–58 form a disordered region; sequence MKLHNLRPAKGGEVKARKRVGRGYGSGLGHNAGRGRDGQNSRSGGGVRPGFEGGQMPL. Composition is skewed to gly residues over residues 22-32 and 43-53; these read RGYGSGLGHNA and SGGGVRPGFEG.

This sequence belongs to the universal ribosomal protein uL15 family. Part of the 50S ribosomal subunit.

In terms of biological role, binds to the 23S rRNA. The sequence is that of Large ribosomal subunit protein uL15 from Finegoldia magna (strain ATCC 29328 / DSM 20472 / WAL 2508) (Peptostreptococcus magnus).